A 398-amino-acid polypeptide reads, in one-letter code: Cystathionine gamma-lyase (398 aa).

Arginine 61, tyrosine 113, and arginine 118 together coordinate substrate. At lysine 211 the chain carries N6-(pyridoxal phosphate)lysine. Glutamate 338 is a binding site for substrate.

It belongs to the trans-sulfuration enzymes family. In terms of assembly, homotetramer. Interacts with CALM in a calcium-dependent manner. Pyridoxal 5'-phosphate serves as cofactor. Detected in liver and kidney, and at lower levels in small intestine (at protein level). Highly expressed in liver, kidney and lung, detected at lower levels in stomach, small intestine and adipose tissue, and hardly found in heart, bone, and thymus.

The protein localises to the cytoplasm. The catalysed reaction is L,L-cystathionine + H2O = 2-oxobutanoate + L-cysteine + NH4(+). The enzyme catalyses L-cysteine + H2O = hydrogen sulfide + pyruvate + NH4(+) + H(+). It carries out the reaction L-homocysteine + H2O = 2-oxobutanoate + hydrogen sulfide + NH4(+) + H(+). It catalyses the reaction L-homoserine = 2-oxobutanoate + NH4(+). The catalysed reaction is L-selenocystathionine + H2O = L-selenocysteine + 2-oxobutanoate + NH4(+). Its pathway is amino-acid biosynthesis; L-cysteine biosynthesis; L-cysteine from L-homocysteine and L-serine: step 2/2. With respect to regulation, activated by calmodulin in the presence of calcium ions. Catalyzes the last step in the trans-sulfuration pathway from L-methionine to L-cysteine in a pyridoxal-5'-phosphate (PLP)-dependent manner, which consists on cleaving the L,L-cystathionine molecule into L-cysteine, ammonia and 2-oxobutanoate. Part of the L-cysteine derived from the trans-sulfuration pathway is utilized for biosynthesis of the ubiquitous antioxidant glutathione. Besides its role in the conversion of L-cystathionine into L-cysteine, it utilizes L-cysteine and L-homocysteine as substrates (at much lower rates than L,L-cystathionine) to produce hydrogen sulfide (H2S). In vitro, it converts two L-cysteine molecules into lanthionine and H2S, and two L-homocysteine molecules to homolanthionine and H2S, which can be particularly relevant under conditions of severe hyperhomocysteinemia. Lanthionine and homolanthionine are structural homologs of L,L-cystathionine that differ by the absence or presence of an extra methylene group, respectively. Acts as a cysteine-protein sulfhydrase by mediating sulfhydration of target proteins: sulfhydration consists of converting -SH groups into -SSH on specific cysteine residues of target proteins such as GAPDH, PTPN1 and NF-kappa-B subunit RELA, thereby regulating their function. By generating the gasotransmitter H2S, it participates in a number of physiological processes such as vasodilation, bone protection, and inflammation. Plays an essential role in myogenesis by contributing to the biogenesis of H2S in skeletal muscle tissue. Can also accept homoserine as substrate. Catalyzes the elimination of selenocystathionine (which can be derived from the diet) to yield selenocysteine, ammonia and 2-oxobutanoate. This is Cystathionine gamma-lyase (Cth) from Mus musculus (Mouse).